The following is a 201-amino-acid chain: Female-specific protein transformer (201 aa).

The segment at 1 to 117 (MDADSSSRSP…RSRSRSRTPR (117 aa)) is disordered. The span at 9–37 (SPRDTRTCARPKEKVPYFADEGRERDRVR) shows a compositional bias: basic and acidic residues. Composition is skewed to basic residues over residues 38-62 (NLRH…RARS) and 99-115 (KQRR…RSRT).

The protein localises to the nucleus speckle. Functionally, member of the regulatory pathway controlling female somatic sexual differentiation, regulated by Sxl. Activates dsx female-specific splicing by promoting the formation of a splicing enhancer complex which consists of tra, tra2 and sr proteins. The sequence is that of Female-specific protein transformer (tra) from Drosophila hydei (Fruit fly).